The primary structure comprises 350 residues: Ketol-acid reductoisomerase (NADP(+)) 2 (350 aa).

The 181-residue stretch at 3–183 folds into the KARI N-terminal Rossmann domain; it reads ATIWYEKDAD…GALRAGAIKT (181 aa). NADP(+)-binding positions include 26 to 29, Arg-49, Ser-52, Ser-54, and 84 to 87; these read YGSQ and DQYQ. His-109 is an active-site residue. Position 135 (Gly-135) interacts with NADP(+). The KARI C-terminal knotted domain maps to 184–327; it reads TFTEETETDL…PKLRAMFSWN (144 aa). 4 residues coordinate Mg(2+): Asp-192, Glu-196, Glu-228, and Glu-232. Ser-253 contacts substrate. The segment at 331–350 is disordered; the sequence is AKDKDETESFNGKIARTQVQ.

The protein belongs to the ketol-acid reductoisomerase family. It depends on Mg(2+) as a cofactor.

It carries out the reaction (2R)-2,3-dihydroxy-3-methylbutanoate + NADP(+) = (2S)-2-acetolactate + NADPH + H(+). The catalysed reaction is (2R,3R)-2,3-dihydroxy-3-methylpentanoate + NADP(+) = (S)-2-ethyl-2-hydroxy-3-oxobutanoate + NADPH + H(+). Its pathway is amino-acid biosynthesis; L-isoleucine biosynthesis; L-isoleucine from 2-oxobutanoate: step 2/4. It functions in the pathway amino-acid biosynthesis; L-valine biosynthesis; L-valine from pyruvate: step 2/4. Functionally, involved in the biosynthesis of branched-chain amino acids (BCAA). Catalyzes an alkyl-migration followed by a ketol-acid reduction of (S)-2-acetolactate (S2AL) to yield (R)-2,3-dihydroxy-isovalerate. In the isomerase reaction, S2AL is rearranged via a Mg-dependent methyl migration to produce 3-hydroxy-3-methyl-2-ketobutyrate (HMKB). In the reductase reaction, this 2-ketoacid undergoes a metal-dependent reduction by NADPH to yield (R)-2,3-dihydroxy-isovalerate. The polypeptide is Ketol-acid reductoisomerase (NADP(+)) 2 (Bifidobacterium longum (strain NCC 2705)).